A 424-amino-acid polypeptide reads, in one-letter code: Serine hydroxymethyltransferase (424 aa).

Residues leucine 113 and 117-119 contribute to the (6S)-5,6,7,8-tetrahydrofolate site; that span reads GHL. The residue at position 222 (lysine 222) is an N6-(pyridoxal phosphate)lysine. Residue 361–363 coordinates (6S)-5,6,7,8-tetrahydrofolate; that stretch reads SPF.

The protein belongs to the SHMT family. As to quaternary structure, homodimer. The cofactor is pyridoxal 5'-phosphate.

Its subcellular location is the cytoplasm. It carries out the reaction (6R)-5,10-methylene-5,6,7,8-tetrahydrofolate + glycine + H2O = (6S)-5,6,7,8-tetrahydrofolate + L-serine. Its pathway is one-carbon metabolism; tetrahydrofolate interconversion. It functions in the pathway amino-acid biosynthesis; glycine biosynthesis; glycine from L-serine: step 1/1. Its function is as follows. Catalyzes the reversible interconversion of serine and glycine with tetrahydrofolate (THF) serving as the one-carbon carrier. This reaction serves as the major source of one-carbon groups required for the biosynthesis of purines, thymidylate, methionine, and other important biomolecules. Also exhibits THF-independent aldolase activity toward beta-hydroxyamino acids, producing glycine and aldehydes, via a retro-aldol mechanism. In Flavobacterium psychrophilum (strain ATCC 49511 / DSM 21280 / CIP 103535 / JIP02/86), this protein is Serine hydroxymethyltransferase.